The sequence spans 152 residues: Deoxyuridine 5'-triphosphate nucleotidohydrolase (152 aa).

Substrate is bound by residues Arg70 to Gly72, Asn83, Leu87 to Asp89, and Met97.

The protein belongs to the dUTPase family. It depends on Mg(2+) as a cofactor.

The catalysed reaction is dUTP + H2O = dUMP + diphosphate + H(+). Its pathway is pyrimidine metabolism; dUMP biosynthesis; dUMP from dCTP (dUTP route): step 2/2. Functionally, this enzyme is involved in nucleotide metabolism: it produces dUMP, the immediate precursor of thymidine nucleotides and it decreases the intracellular concentration of dUTP so that uracil cannot be incorporated into DNA. This is Deoxyuridine 5'-triphosphate nucleotidohydrolase from Buchnera aphidicola subsp. Baizongia pistaciae (strain Bp).